Reading from the N-terminus, the 852-residue chain is Gamma-tubulin complex component 2 homolog (852 aa).

A Phosphoserine modification is found at Ser-73.

It belongs to the TUBGCP family. In terms of assembly, gamma-tubulin small complex (Gamma TuSC) is a heterotetrameric complex which contains two molecules of gamma-tubulin, and one molecule each of Dgrip84 and Dgrip91. The gamma-tubulin in this complex binds preferentially to GDP over GTP.

Its subcellular location is the cytoplasm. It localises to the cytoskeleton. It is found in the microtubule organizing center. The protein localises to the centrosome. The protein resides in the perinuclear region. The sequence is that of Gamma-tubulin complex component 2 homolog (Grip84) from Drosophila melanogaster (Fruit fly).